Consider the following 122-residue polypeptide: Large ribosomal subunit protein uL14 (122 aa).

Belongs to the universal ribosomal protein uL14 family. In terms of assembly, part of the 50S ribosomal subunit. Forms a cluster with proteins L3 and L19. In the 70S ribosome, L14 and L19 interact and together make contacts with the 16S rRNA in bridges B5 and B8.

In terms of biological role, binds to 23S rRNA. Forms part of two intersubunit bridges in the 70S ribosome. This is Large ribosomal subunit protein uL14 from Rhodopirellula baltica (strain DSM 10527 / NCIMB 13988 / SH1).